The sequence spans 442 residues: D-serine dehydratase 1 (442 aa).

An N6-(pyridoxal phosphate)lysine modification is found at Lys118.

This sequence belongs to the serine/threonine dehydratase family. DsdA subfamily. As to quaternary structure, monomer. The cofactor is pyridoxal 5'-phosphate.

The catalysed reaction is D-serine = pyruvate + NH4(+). The sequence is that of D-serine dehydratase 1 from Escherichia coli (strain UTI89 / UPEC).